The following is a 208-amino-acid chain: MRKIRTKICGITTPEDALYAAHAGADALGLVFYPQSPRAIDIIKAQKIAAALPPFVSVVALFVNESAQNIRRILAEVPIHIIQFHGDEDDAFCRQFDRPYIKAIRVQTASDIRNAATRFPNAQALLFDAYHPSEYGGTGHRFDWTLLAEYSGKPWVLAGGLTPENVGEAVRITGAEAVDVSGGVEASKGKKDPAKVAAFIATANRLSR.

It belongs to the TrpF family.

It carries out the reaction N-(5-phospho-beta-D-ribosyl)anthranilate = 1-(2-carboxyphenylamino)-1-deoxy-D-ribulose 5-phosphate. It functions in the pathway amino-acid biosynthesis; L-tryptophan biosynthesis; L-tryptophan from chorismate: step 3/5. The polypeptide is N-(5'-phosphoribosyl)anthranilate isomerase (Neisseria gonorrhoeae (strain ATCC 700825 / FA 1090)).